Here is a 739-residue protein sequence, read N- to C-terminus: Catalase-peroxidase 1 (739 aa).

The segment at 1–33 (MPEDRPIEDSPPIGEAQTDAPAGGCPAGFGRIK) is disordered. A cross-link (tryptophyl-tyrosyl-methioninium (Trp-Tyr) (with M-262)) is located at residues 113–236 (WHAAGTYRVS…LAAVQMGLIY (124 aa)). Histidine 114 (proton acceptor) is an active-site residue. Positions 236–262 (YVNPEGPNGNPDPQASAIDIRETFGRM) form a cross-link, tryptophyl-tyrosyl-methioninium (Tyr-Met) (with W-113). Histidine 277 is a heme b binding site.

The protein belongs to the peroxidase family. Peroxidase/catalase subfamily. Homodimer or homotetramer. Heme b serves as cofactor. Post-translationally, formation of the three residue Trp-Tyr-Met cross-link is important for the catalase, but not the peroxidase activity of the enzyme.

It catalyses the reaction H2O2 + AH2 = A + 2 H2O. The enzyme catalyses 2 H2O2 = O2 + 2 H2O. Functionally, bifunctional enzyme with both catalase and broad-spectrum peroxidase activity. May play a role in the intracellular survival of mycobacteria. This Mycolicibacterium smegmatis (strain ATCC 700084 / mc(2)155) (Mycobacterium smegmatis) protein is Catalase-peroxidase 1.